The primary structure comprises 119 residues: MVFGTGVDNVELSRIQKALTRSERFVEQVLTTMELEKYNNFQSTARKTEFLAGRWAAKEAFSKAYGTGFGKALGMHDLEIKNDELGKPYFSKHPFEGQVHLSISHSNLEAVAFVVLEKN.

Residues Asp8 and Glu59 each contribute to the Mg(2+) site.

The protein belongs to the P-Pant transferase superfamily. AcpS family. Mg(2+) serves as cofactor.

Its subcellular location is the cytoplasm. It carries out the reaction apo-[ACP] + CoA = holo-[ACP] + adenosine 3',5'-bisphosphate + H(+). Transfers the 4'-phosphopantetheine moiety from coenzyme A to a Ser of acyl-carrier-protein. The sequence is that of Holo-[acyl-carrier-protein] synthase from Lactococcus lactis subsp. cremoris (strain SK11).